The chain runs to 296 residues: Ribonuclease H2 subunit A (296 aa).

Residues 14 to 236 (PCLMGIDEAG…CTTHLKGEVE (223 aa)) enclose the RNase H type-2 domain. A divalent metal cation is bound by residues aspartate 20, glutamate 21, and aspartate 127.

Belongs to the RNase HII family. Eukaryotic subfamily. Mn(2+) serves as cofactor. Mg(2+) is required as a cofactor.

The enzyme catalyses Endonucleolytic cleavage to 5'-phosphomonoester.. In terms of biological role, catalytic subunit of RNase HII, an endonuclease that specifically degrades the RNA of RNA:DNA hybrids. Participates in DNA replication, possibly by mediating the removal of lagging-strand Okazaki fragment RNA primers during DNA replication. Mediates the excision of single ribonucleotides from DNA:RNA duplexes. The sequence is that of Ribonuclease H2 subunit A from Arabidopsis thaliana (Mouse-ear cress).